Consider the following 446-residue polypeptide: UDP-N-acetylmuramoylalanine--D-glutamate ligase (446 aa).

Gly115 to Thr121 contacts ATP.

Belongs to the MurCDEF family.

Its subcellular location is the cytoplasm. It carries out the reaction UDP-N-acetyl-alpha-D-muramoyl-L-alanine + D-glutamate + ATP = UDP-N-acetyl-alpha-D-muramoyl-L-alanyl-D-glutamate + ADP + phosphate + H(+). The protein operates within cell wall biogenesis; peptidoglycan biosynthesis. In terms of biological role, cell wall formation. Catalyzes the addition of glutamate to the nucleotide precursor UDP-N-acetylmuramoyl-L-alanine (UMA). The protein is UDP-N-acetylmuramoylalanine--D-glutamate ligase of Trichlorobacter lovleyi (strain ATCC BAA-1151 / DSM 17278 / SZ) (Geobacter lovleyi).